Consider the following 96-residue polypeptide: Protein Vpr (96 aa).

A homooligomerization region spans residues 1–42 (MEQAPADQGPQREPHNEWTLELLEELKQEAVRHFPRIWLHSL). Residues Ser-79, Ser-94, and Ser-96 each carry the phosphoserine; by host modification.

It belongs to the HIV-1 VPR protein family. In terms of assembly, homooligomer, may form homodimer. Interacts with p6-gag region of the Pr55 Gag precursor protein through a (Leu-X-X)4 motif near the C-terminus of the P6gag protein. Interacts with host UNG. May interact with host RAD23A/HHR23A. Interacts with host VPRBP/DCAF1, leading to hijack the CUL4A-RBX1-DDB1-DCAF1/VPRBP complex, mediating ubiquitination of host proteins such as TERT and ZGPAT and arrest of the cell cycle in G2 phase. In terms of processing, phosphorylated on several residues by host. These phosphorylations regulate VPR activity for the nuclear import of the HIV-1 pre-integration complex.

The protein resides in the virion. Its subcellular location is the host nucleus. It is found in the host extracellular space. Functionally, during virus replication, may deplete host UNG protein, and incude G2-M cell cycle arrest. Acts by targeting specific host proteins for degradation by the 26S proteasome, through association with the cellular CUL4A-DDB1 E3 ligase complex by direct interaction with host VPRPB/DCAF-1. Cell cycle arrest reportedly occurs within hours of infection and is not blocked by antiviral agents, suggesting that it is initiated by the VPR carried into the virion. Additionally, VPR induces apoptosis in a cell cycle dependent manner suggesting that these two effects are mechanistically linked. Detected in the serum and cerebrospinal fluid of AIDS patient, VPR may also induce cell death to bystander cells. During virus entry, plays a role in the transport of the viral pre-integration (PIC) complex to the host nucleus. This function is crucial for viral infection of non-dividing macrophages. May act directly at the nuclear pore complex, by binding nucleoporins phenylalanine-glycine (FG)-repeat regions. This Homo sapiens (Human) protein is Protein Vpr.